The sequence spans 330 residues: Clp protease adapter protein ClpF, chloroplastic (330 aa).

The transit peptide at 1–65 (MVQSQSLSTL…KSLKQRNLLR (65 aa)) directs the protein to the chloroplast. Residues 66 to 138 (VEARWPFQGG…VEEESIRLQE (73 aa)) are NTD, required for CLPS1-binding. Coiled-coil stretches lie at residues 112-139 (NLEQ…LQEG) and 175-195 (AAKL…VSAK). Positions 153-188 (GISIIRLRADLQNAIDSEDYGLAAKLRDEISKLEAE) constitute a UVR domain. The interval 203 to 310 (EYAFRLGQKL…TAGDFIPVKQ (108 aa)) is yccV-like.

As to quaternary structure, binds to CLPC1 and CLPC2. Interacts with ClpS1; this interaction stimulates their association with ClpC. Associates with the Clp substrate HEMA1 (GluTR). In terms of tissue distribution, expressed constitutively in photosynthetic tissues such as leaves, stems and flowers, and, at low levels, in siliques.

The protein localises to the plastid. It localises to the chloroplast. Clp protease adapter that facilitates CLPS1 recruitment to ClpC chaperones thus forming a binary adapter for selective substrate recognition and delivery to plastid Clp protease system (CLPC). In Arabidopsis thaliana (Mouse-ear cress), this protein is Clp protease adapter protein ClpF, chloroplastic.